A 130-amino-acid chain; its full sequence is Sulfurtransferase TusD (130 aa).

Residue cysteine 78 is the Cysteine persulfide intermediate of the active site.

It belongs to the DsrE/TusD family. In terms of assembly, heterohexamer, formed by a dimer of trimers. The hexameric TusBCD complex contains 2 copies each of TusB, TusC and TusD. The TusBCD complex interacts with TusE.

It localises to the cytoplasm. Functionally, part of a sulfur-relay system required for 2-thiolation of 5-methylaminomethyl-2-thiouridine (mnm(5)s(2)U) at tRNA wobble positions. Accepts sulfur from TusA and transfers it in turn to TusE. This chain is Sulfurtransferase TusD, found in Buchnera aphidicola subsp. Baizongia pistaciae (strain Bp).